A 469-amino-acid polypeptide reads, in one-letter code: ATP-dependent protease ATPase subunit HslU (469 aa).

ATP contacts are provided by residues isoleucine 24, glycine 66–glutamate 71, aspartate 282, glutamate 347, and arginine 419.

The protein belongs to the ClpX chaperone family. HslU subfamily. As to quaternary structure, a double ring-shaped homohexamer of HslV is capped on each side by a ring-shaped HslU homohexamer. The assembly of the HslU/HslV complex is dependent on binding of ATP.

The protein localises to the cytoplasm. In terms of biological role, ATPase subunit of a proteasome-like degradation complex; this subunit has chaperone activity. The binding of ATP and its subsequent hydrolysis by HslU are essential for unfolding of protein substrates subsequently hydrolyzed by HslV. HslU recognizes the N-terminal part of its protein substrates and unfolds these before they are guided to HslV for hydrolysis. The protein is ATP-dependent protease ATPase subunit HslU of Listeria monocytogenes serovar 1/2a (strain ATCC BAA-679 / EGD-e).